We begin with the raw amino-acid sequence, 395 residues long: Beta-1,4-galactosyltransferase 3 (395 aa).

Over 1–10 (MLRRLLERPC) the chain is Cytoplasmic. Residues 11–31 (TLALLVGSQLAVMMYLSLGGF) traverse the membrane as a helical; Signal-anchor for type II membrane protein segment. Residues 32–395 (RSLSALFGRD…ANHTAPHGSH (364 aa)) lie on the Lumenal side of the membrane. An N-linked (GlcNAc...) asparagine glycan is attached at asparagine 57. Residues cysteine 79 and cysteine 121 are joined by a disulfide bond. 132-136 (PHRAR) lines the UDP-alpha-D-galactose pocket. Asparagine 168 carries N-linked (GlcNAc...) asparagine glycosylation. UDP-alpha-D-galactose-binding positions include 171–173 (FNR), 198–199 (VD), tyrosine 228, and tryptophan 260. A disulfide bridge links cysteine 192 with cysteine 211. Aspartate 199 serves as a coordination point for Mn(2+). 262–265 (GEDD) provides a ligand contact to N-acetyl-D-glucosamine. Histidine 293 lines the Mn(2+) pocket. 293-295 (HRG) contributes to the UDP-alpha-D-galactose binding site. An N-acetyl-D-glucosamine-binding site is contributed by arginine 305. N-linked (GlcNAc...) asparagine glycosylation is found at asparagine 339 and asparagine 387. Residues 341–395 (TADIGTDPRGPRAPSGPRYPPGSSQAFRQEMLQRRPPARPGPLPTANHTAPHGSH) form a disordered region.

It belongs to the glycosyltransferase 7 family. Mn(2+) serves as cofactor.

The protein localises to the golgi apparatus. Its subcellular location is the golgi stack membrane. It carries out the reaction an N-acetyl-beta-D-glucosaminyl derivative + UDP-alpha-D-galactose = a beta-D-galactosyl-(1-&gt;4)-N-acetyl-beta-D-glucosaminyl derivative + UDP + H(+). It catalyses the reaction N-acetyl-D-glucosamine + UDP-alpha-D-galactose = beta-D-galactosyl-(1-&gt;4)-N-acetyl-D-glucosamine + UDP + H(+). The catalysed reaction is a beta-D-GlcNAc-(1-&gt;3)-beta-D-Gal-(1-&gt;4)-beta-D-Glc-(1&lt;-&gt;1)-Cer(d18:1(4E)) + UDP-alpha-D-galactose = a neolactoside nLc4Cer(d18:1(4E)) + UDP + H(+). The enzyme catalyses a beta-D-glucosylceramide + UDP-alpha-D-galactose = a beta-D-galactosyl-(1-&gt;4)-beta-D-glucosyl-(1&lt;-&gt;1)-ceramide + UDP + H(+). It carries out the reaction a neolactoside IV(3)-beta-GlcNAc-nLc4Cer + UDP-alpha-D-galactose = a neolactoside nLc6Cer + UDP + H(+). The protein operates within protein modification; protein glycosylation. Responsible for the synthesis of complex-type N-linked oligosaccharides in many glycoproteins as well as the carbohydrate moieties of glycolipids. The sequence is that of Beta-1,4-galactosyltransferase 3 from Rattus norvegicus (Rat).